The following is a 175-amino-acid chain: Adenine phosphoribosyltransferase (175 aa).

The protein belongs to the purine/pyrimidine phosphoribosyltransferase family. In terms of assembly, homodimer.

The protein localises to the cytoplasm. It catalyses the reaction AMP + diphosphate = 5-phospho-alpha-D-ribose 1-diphosphate + adenine. It functions in the pathway purine metabolism; AMP biosynthesis via salvage pathway; AMP from adenine: step 1/1. In terms of biological role, catalyzes a salvage reaction resulting in the formation of AMP, that is energically less costly than de novo synthesis. This chain is Adenine phosphoribosyltransferase, found in Lactobacillus johnsonii (strain CNCM I-12250 / La1 / NCC 533).